An 858-amino-acid polypeptide reads, in one-letter code: Tetratricopeptide repeat protein 7A (858 aa).

Phosphoserine is present on Ser51. TPR repeat units follow at residues 121–157, 177–210, 414–447, 497–531, 533–565, and 566–599; these read CEAM…MENK, ERLP…AQVF, FHLW…RPSD, YSLQ…APSD, QVIL…RKDD, and AHAL…HPEN. Ser182 carries the post-translational modification Phosphoserine. 4 positions are modified to phosphoserine: Ser647, Ser678, Ser679, and Ser690. A Phosphothreonine modification is found at Thr693. TPR repeat units lie at residues 745–778, 780–812, and 813–846; these read HSVL…NPDG, RIMH…QSTC, and HEAW…EASS.

In terms of assembly, component of a phosphatidylinositol 4-kinase (PI4K) complex, composed of PI4KA, EFR3 (EFR3A or EFR3B), TTC7 (TTC7A or TTC7B) and HYCC (HYCC1 or HYCC2). Interacts with PI4KA. Interaction with PI4KA is direct. Interacts with EFR3 (EFR3A or EFR3B), interaction is direct. Interacts with HYCC (HYCC1 or HYCC2), interaction is direct. Association with the PI4K complex is strongly reduced by TMEM150A. In terms of tissue distribution, expressed in epithelial cells of the intestine, thymus, and pancreas (at protein level).

Its subcellular location is the cytoplasm. The protein localises to the cell membrane. In terms of biological role, component of a complex required to localize phosphatidylinositol 4-kinase (PI4K) to the plasma membrane. The complex acts as a regulator of phosphatidylinositol 4-phosphate (PtdIns(4)P) synthesis. In the complex, plays a central role in bridging PI4KA to EFR3B and HYCC1, via direct interactions. The sequence is that of Tetratricopeptide repeat protein 7A from Homo sapiens (Human).